A 131-amino-acid chain; its full sequence is MSGWDDYIKLLFGKSPAIKRAAIIGSDGSVWARSGDANAFRATEVELKRFAALFNDINSVPGTGADLEEIHYIVPRVEEKLIFGKKEQTGFFAAKTNQAIVIAMYEGDNAQSASVRAGVEYIAQYLASSGY.

It belongs to the profilin family. Occurs in many kinds of cells as a complex with monomeric actin in a 1:1 ratio. In terms of tissue distribution, expressed in the intestinal wall, the spermatheca, and the pharynx.

The protein resides in the cytoplasm. It is found in the cytoskeleton. Its function is as follows. Binds to actin and affects the structure of the cytoskeleton. At high concentrations, profilin prevents the polymerization of actin, whereas it enhances it at low concentrations. By binding to PIP2, it inhibits the formation of IP3 and DG. This Caenorhabditis elegans protein is Profilin-2 (pfn-2).